The primary structure comprises 293 residues: 4-hydroxy-tetrahydrodipicolinate synthase (293 aa).

Position 45 (Thr45) interacts with pyruvate. Tyr133 functions as the Proton donor/acceptor in the catalytic mechanism. Lys161 (schiff-base intermediate with substrate) is an active-site residue. Pyruvate is bound at residue Ile203.

The protein belongs to the DapA family. Homotetramer; dimer of dimers.

Its subcellular location is the cytoplasm. The catalysed reaction is L-aspartate 4-semialdehyde + pyruvate = (2S,4S)-4-hydroxy-2,3,4,5-tetrahydrodipicolinate + H2O + H(+). It participates in amino-acid biosynthesis; L-lysine biosynthesis via DAP pathway; (S)-tetrahydrodipicolinate from L-aspartate: step 3/4. Catalyzes the condensation of (S)-aspartate-beta-semialdehyde [(S)-ASA] and pyruvate to 4-hydroxy-tetrahydrodipicolinate (HTPA). This is 4-hydroxy-tetrahydrodipicolinate synthase from Exiguobacterium sibiricum (strain DSM 17290 / CCUG 55495 / CIP 109462 / JCM 13490 / 255-15).